The following is a 111-amino-acid chain: MAGFGLPNFGQLTEAFKKAQQIQQDAQKLQEELDAMEIEGSSVDGKASIWLSGNQQPLRVRLAPELLASGQEATEAATLEALQNAYAQSTATMKERMEELTGGLNLPGLGG.

The protein belongs to the YbaB/EbfC family. Homodimer.

The protein resides in the cytoplasm. It localises to the nucleoid. Functionally, binds to DNA and alters its conformation. May be involved in regulation of gene expression, nucleoid organization and DNA protection. This is Nucleoid-associated protein SynRCC307_0025 from Synechococcus sp. (strain RCC307).